The following is a 726-amino-acid chain: MSSRTLVGLRSTTSTHLQRSGVAAAAAVSSSSTSSSGSAPRRCLSSASGRQVQQSAEFSSSSKSWDRLGRRAKEKLLDREFFLSLLNSASTKREAKSYLARLKAQHQGTPPLKPAAKQPGVAEAAAPVSSGASSTSFYGASRSVYDSPVFRHDSTPTPPLQDVSERLHLALVKITTPQLLDDSTVNGVAKTLSQLNRLGMACCVVVDPGTAGDSNQLRRIAAEQADRISTAVDAQPDSKSAHIDSVLSVSALNPEAPKVLSRKLLLGPLRDGHIVVLAPIAYTEDVPRAVTVSASDAILALTKELAGLATNPDPDEDPIRTAQRIAGLQEEVSLDRVILLDPLGGIPAFSGPQTSHVFINMEQEFDDIENELLRVWQSAASAKNNLPEEGLPSIADSNPLSKFADTEVVPVPPSQKAYSSDLTLGTSMVEGHINNLRLSQAALAMLPSASSSIITSPLEVANSAQSPGGASPDVSAVGTRRQRNPLIHNLLTDKPLLSSSLPLSRRAALNGRRDSIATQPSHTTFVKRGMPLTIIPNPWLSPWTAKDRPRLGLDDPSIDLPRLVHLIEDSFNRKLDVQDYLNRVNGRLAGLIIAGEYEGGAILTWELPPGVEDDGSEASQARMVPYLDKFAVLKRSQGAGGVADIVFNAMVRSCFPNGVCWRSRKDNPVNKWYFERSQGTWKLSDMNWTMFWTTPGLTEDSQKFRDYEAVCRSIQPSWADDTGVVD.

Residues 1–18 are compositionally biased toward polar residues; sequence MSSRTLVGLRSTTSTHLQ. A mitochondrion-targeting transit peptide spans 1–44; sequence MSSRTLVGLRSTTSTHLQRSGVAAAAAVSSSSTSSSGSAPRRCL. The segment at 1 to 64 is disordered; sequence MSSRTLVGLR…SAEFSSSSKS (64 aa). Low complexity predominate over residues 20–39; the sequence is SGVAAAAAVSSSSTSSSGSA. Residues 45–58 are compositionally biased toward polar residues; that stretch reads SSASGRQVQQSAEF. Positions 547-716 constitute an N-acetyltransferase domain; sequence DRPRLGLDDP…YEAVCRSIQP (170 aa).

The protein belongs to the acetyltransferase family.

It is found in the mitochondrion. The enzyme catalyses L-glutamate + acetyl-CoA = N-acetyl-L-glutamate + CoA + H(+). It functions in the pathway amino-acid biosynthesis; L-arginine biosynthesis; N(2)-acetyl-L-ornithine from L-glutamate: step 1/4. In terms of biological role, N-acetylglutamate synthase involved in arginine biosynthesis. The protein is Amino-acid acetyltransferase, mitochondrial (arg2) of Aspergillus niger (strain ATCC MYA-4892 / CBS 513.88 / FGSC A1513).